Reading from the N-terminus, the 287-residue chain is Gliotoxin thiomethyltransferase GtmA (287 aa).

2 residues coordinate S-adenosyl-L-methionine: Thr-27 and Ala-54. Cys-55 and Cys-80 are disulfide-bonded. Positions 82, 87, 109, 110, 126, and 248 each coordinate S-adenosyl-L-methionine.

This sequence belongs to the class I-like SAM-binding methyltransferase superfamily.

It localises to the cytoplasm. It catalyses the reaction a thiol + S-adenosyl-L-methionine = a methyl thioether + S-adenosyl-L-homocysteine + H(+). Functionally, S-methyltransferase that catalyzes the irreversible conversion of the secondary metabolite gliotoxin to bis(methylthio)gliotoxin (BmGT). Gliotoxin, a member of the epipolythiodioxopiperazine (ETP) class of toxins, is characterized by a disulfide bridged cyclic dipeptide. Its thiol groups are essential for bioactivity, as they conjugate to sulfur-containing proteins, disturb the intracellular redox equilibrium, and generate reactive oxygen species by cycling between reduced and oxidized states. The enzyme prevents self-intoxication of the fungus by irreversible conversion of the toxic gliotoxin to a biologically inactive bis-thiomethylated derivative. Appears to negatively regulate gliotoxin biosynthesis. The sequence is that of Gliotoxin thiomethyltransferase GtmA from Aspergillus fumigatus (strain ATCC MYA-4609 / CBS 101355 / FGSC A1100 / Af293) (Neosartorya fumigata).